A 579-amino-acid chain; its full sequence is Proline--tRNA ligase (579 aa).

It belongs to the class-II aminoacyl-tRNA synthetase family. ProS type 1 subfamily. In terms of assembly, homodimer.

Its subcellular location is the cytoplasm. It carries out the reaction tRNA(Pro) + L-proline + ATP = L-prolyl-tRNA(Pro) + AMP + diphosphate. Catalyzes the attachment of proline to tRNA(Pro) in a two-step reaction: proline is first activated by ATP to form Pro-AMP and then transferred to the acceptor end of tRNA(Pro). As ProRS can inadvertently accommodate and process non-cognate amino acids such as alanine and cysteine, to avoid such errors it has two additional distinct editing activities against alanine. One activity is designated as 'pretransfer' editing and involves the tRNA(Pro)-independent hydrolysis of activated Ala-AMP. The other activity is designated 'posttransfer' editing and involves deacylation of mischarged Ala-tRNA(Pro). The misacylated Cys-tRNA(Pro) is not edited by ProRS. The sequence is that of Proline--tRNA ligase from Chlamydia muridarum (strain MoPn / Nigg).